The sequence spans 369 residues: Histidine decarboxylase (369 aa).

His119 is a binding site for substrate. Residue Lys230 is modified to N6-(pyridoxal phosphate)lysine.

Belongs to the group II decarboxylase family. Homotetramer. Requires pyridoxal 5'-phosphate as cofactor.

It catalyses the reaction L-histidine + H(+) = histamine + CO2. This chain is Histidine decarboxylase, found in Mesorhizobium japonicum (strain LMG 29417 / CECT 9101 / MAFF 303099) (Mesorhizobium loti (strain MAFF 303099)).